A 485-amino-acid polypeptide reads, in one-letter code: Regulatory protein ViaA (485 aa).

It belongs to the ViaA family. In terms of assembly, homodimer. Interacts with RavA.

Its subcellular location is the cytoplasm. Component of the RavA-ViaA chaperone complex, which may act on the membrane to optimize the function of some of the respiratory chains. ViaA stimulates the ATPase activity of RavA. This is Regulatory protein ViaA from Photorhabdus laumondii subsp. laumondii (strain DSM 15139 / CIP 105565 / TT01) (Photorhabdus luminescens subsp. laumondii).